The sequence spans 246 residues: Putative F-box/LRR-repeat protein 9 (246 aa).

The region spanning Tyr-18–Ile-65 is the F-box domain.

The polypeptide is Putative F-box/LRR-repeat protein 9 (FBL9) (Arabidopsis thaliana (Mouse-ear cress)).